A 565-amino-acid polypeptide reads, in one-letter code: Salicyl-AMP ligase / salicyl-S-ArCP synthetase (565 aa).

Glycine 214, glycine 330, valine 352, aspartate 436, arginine 451, and lysine 542 together coordinate ATP.

It belongs to the ATP-dependent AMP-binding enzyme family.

The catalysed reaction is salicylate + ATP + H(+) = 2-hydroxybenzoyl-5'-AMP + diphosphate. It carries out the reaction 2-hydroxybenzoyl-5'-AMP + holo-[ACP] = salicyl-[ACP] + AMP + H(+). It participates in siderophore biosynthesis; mycobactin biosynthesis. With respect to regulation, inhibited by salicyl-AMS, an acyl-AMP analog. Also inhibited by 5'-O-[(N-acyl)sulfamoyl]adenosines. In terms of biological role, involved in the initial steps of the mycobactin biosynthetic pathway. Catalyzes the salicylation of the aryl carrier protein (ArCP) domain of MbtB through a two-step reaction. The first step is the ATP-dependent adenylation of salicylate to generate a salicyl-AMP intermediate. The second step is the transfer of this activated salicylate to MbtB to form a salicyl-ArCP domain thioester. In Mycobacterium tuberculosis (strain ATCC 25618 / H37Rv), this protein is Salicyl-AMP ligase / salicyl-S-ArCP synthetase.